The sequence spans 126 residues: Holo-[acyl-carrier-protein] synthase (126 aa).

Mg(2+)-binding residues include Asp9 and Glu58.

The protein belongs to the P-Pant transferase superfamily. AcpS family. The cofactor is Mg(2+).

The protein localises to the cytoplasm. It carries out the reaction apo-[ACP] + CoA = holo-[ACP] + adenosine 3',5'-bisphosphate + H(+). Transfers the 4'-phosphopantetheine moiety from coenzyme A to a Ser of acyl-carrier-protein. This is Holo-[acyl-carrier-protein] synthase from Salmonella paratyphi B (strain ATCC BAA-1250 / SPB7).